The following is a 556-amino-acid chain: Glucose-6-phosphate isomerase (556 aa).

Catalysis depends on glutamate 360, which acts as the Proton donor. Active-site residues include histidine 391 and lysine 519.

It belongs to the GPI family.

The protein localises to the cytoplasm. It carries out the reaction alpha-D-glucose 6-phosphate = beta-D-fructose 6-phosphate. The protein operates within carbohydrate biosynthesis; gluconeogenesis. It functions in the pathway carbohydrate degradation; glycolysis; D-glyceraldehyde 3-phosphate and glycerone phosphate from D-glucose: step 2/4. In terms of biological role, catalyzes the reversible isomerization of glucose-6-phosphate to fructose-6-phosphate. This is Glucose-6-phosphate isomerase from Acinetobacter baumannii (strain AB0057).